The sequence spans 440 residues: Xaa-Pro dipeptidase (440 aa).

Mn(2+)-binding residues include Asp-244, Asp-255, His-335, Glu-380, and Glu-419.

It belongs to the peptidase M24B family. Bacterial-type prolidase subfamily. It depends on Mn(2+) as a cofactor.

The catalysed reaction is Xaa-L-Pro dipeptide + H2O = an L-alpha-amino acid + L-proline. In terms of biological role, splits dipeptides with a prolyl residue in the C-terminal position. The chain is Xaa-Pro dipeptidase from Shewanella baltica (strain OS223).